The primary structure comprises 639 residues: Threonine--tRNA ligase (639 aa).

A TGS domain is found at 1–61 (MATVRLPDGK…DGGGELEFVT (61 aa)). The interval 239 to 536 (DHRRLGRELG…LIEHYAGAFP (298 aa)) is catalytic. Positions 333, 384, and 513 each coordinate Zn(2+).

This sequence belongs to the class-II aminoacyl-tRNA synthetase family. In terms of assembly, homodimer. It depends on Zn(2+) as a cofactor.

It is found in the cytoplasm. It catalyses the reaction tRNA(Thr) + L-threonine + ATP = L-threonyl-tRNA(Thr) + AMP + diphosphate + H(+). Catalyzes the attachment of threonine to tRNA(Thr) in a two-step reaction: L-threonine is first activated by ATP to form Thr-AMP and then transferred to the acceptor end of tRNA(Thr). Also edits incorrectly charged L-seryl-tRNA(Thr). In Rubrobacter xylanophilus (strain DSM 9941 / JCM 11954 / NBRC 16129 / PRD-1), this protein is Threonine--tRNA ligase.